A 180-amino-acid polypeptide reads, in one-letter code: ADP-ribosylation factor 4 (180 aa).

A lipid anchor (N-myristoyl glycine) is attached at glycine 2. GTP-binding positions include 24 to 31, 67 to 71, and 126 to 129; these read GLDAAGKT, DVGGQ, and NKQD. Phosphoserine is present on serine 147.

The protein belongs to the small GTPase superfamily. Arf family. Forms a complex containing RAB11A, ASAP1, RAB3IP, RAP11FIP3 and ARF4; the complex promotes preciliary trafficking; the complex binds to RHO in photoreceptor cells and promotes RHO ciliary transport.

The protein resides in the golgi apparatus. It localises to the membrane. GTP-binding protein that functions as an allosteric activator of the cholera toxin catalytic subunit, an ADP-ribosyltransferase. Involved in protein trafficking; may modulate vesicle budding and uncoating within the Golgi apparatus. Part of the ciliary targeting complex containing Rab11, ASAP1, Rabin8/RAB3IP, RAB11FIP3 and ARF4, which direct preciliary vesicle trafficking to mother centriole and ciliogenesis initiation. The chain is ADP-ribosylation factor 4 (Arf4) from Mus musculus (Mouse).